Consider the following 361-residue polypeptide: sn-glycerol-3-phosphate import ATP-binding protein UgpC (361 aa).

An ABC transporter domain is found at 4-235 (LSLKGVRKSY…PATVFVAGFI (232 aa)). Residue 37 to 44 (GPSGCGKS) coordinates ATP.

The protein belongs to the ABC transporter superfamily. sn-glycerol-3-phosphate importer (TC 3.A.1.1.3) family. As to quaternary structure, the complex is composed of two ATP-binding proteins (UgpC), two transmembrane proteins (UgpA and UgpE) and a solute-binding protein (UgpB).

Its subcellular location is the cell inner membrane. The catalysed reaction is sn-glycerol 3-phosphate(out) + ATP + H2O = sn-glycerol 3-phosphate(in) + ADP + phosphate + H(+). In terms of biological role, part of the ABC transporter complex UgpBAEC involved in sn-glycerol-3-phosphate (G3P) import. Responsible for energy coupling to the transport system. This chain is sn-glycerol-3-phosphate import ATP-binding protein UgpC, found in Burkholderia cenocepacia (strain HI2424).